Here is a 227-residue protein sequence, read N- to C-terminus: Cytochrome c oxidase subunit 2 (227 aa).

At 1 to 14 (MAYPFQLGLQDATS) the chain is on the mitochondrial intermembrane side. A helical transmembrane segment spans residues 15–45 (PIMEELLHFHDHALMIVFLISSLVLYIISLM). At 46-59 (LTTKLTHTSTMDAQ) the chain is on the mitochondrial matrix side. A helical transmembrane segment spans residues 60 to 87 (EVETVWTILPAIILILIALPSLRILYMM). The Mitochondrial intermembrane portion of the chain corresponds to 88 to 227 (DEINNPSLTV…YFETWSALMV (140 aa)). Cu cation-binding residues include histidine 161, cysteine 196, glutamate 198, cysteine 200, histidine 204, and methionine 207. Glutamate 198 provides a ligand contact to Mg(2+). The residue at position 218 (tyrosine 218) is a Phosphotyrosine.

The protein belongs to the cytochrome c oxidase subunit 2 family. Component of the cytochrome c oxidase (complex IV, CIV), a multisubunit enzyme composed of 14 subunits. The complex is composed of a catalytic core of 3 subunits MT-CO1, MT-CO2 and MT-CO3, encoded in the mitochondrial DNA, and 11 supernumerary subunits COX4I, COX5A, COX5B, COX6A, COX6B, COX6C, COX7A, COX7B, COX7C, COX8 and NDUFA4, which are encoded in the nuclear genome. The complex exists as a monomer or a dimer and forms supercomplexes (SCs) in the inner mitochondrial membrane with NADH-ubiquinone oxidoreductase (complex I, CI) and ubiquinol-cytochrome c oxidoreductase (cytochrome b-c1 complex, complex III, CIII), resulting in different assemblies (supercomplex SCI(1)III(2)IV(1) and megacomplex MCI(2)III(2)IV(2)). Found in a complex with TMEM177, COA6, COX18, COX20, SCO1 and SCO2. Interacts with TMEM177 in a COX20-dependent manner. Interacts with COX20. Interacts with COX16. The cofactor is Cu cation.

Its subcellular location is the mitochondrion inner membrane. It carries out the reaction 4 Fe(II)-[cytochrome c] + O2 + 8 H(+)(in) = 4 Fe(III)-[cytochrome c] + 2 H2O + 4 H(+)(out). Component of the cytochrome c oxidase, the last enzyme in the mitochondrial electron transport chain which drives oxidative phosphorylation. The respiratory chain contains 3 multisubunit complexes succinate dehydrogenase (complex II, CII), ubiquinol-cytochrome c oxidoreductase (cytochrome b-c1 complex, complex III, CIII) and cytochrome c oxidase (complex IV, CIV), that cooperate to transfer electrons derived from NADH and succinate to molecular oxygen, creating an electrochemical gradient over the inner membrane that drives transmembrane transport and the ATP synthase. Cytochrome c oxidase is the component of the respiratory chain that catalyzes the reduction of oxygen to water. Electrons originating from reduced cytochrome c in the intermembrane space (IMS) are transferred via the dinuclear copper A center (CU(A)) of subunit 2 and heme A of subunit 1 to the active site in subunit 1, a binuclear center (BNC) formed by heme A3 and copper B (CU(B)). The BNC reduces molecular oxygen to 2 water molecules using 4 electrons from cytochrome c in the IMS and 4 protons from the mitochondrial matrix. This chain is Cytochrome c oxidase subunit 2 (MT-CO2), found in Canis aureus (Golden jackal).